The following is a 372-amino-acid chain: DNA damage-repair/toleration protein DRT100 (372 aa).

A signal peptide spans 1-26 (MRKLLASPFSSLLAVVFISVISVVRC). LRR repeat units follow at residues 136 to 158 (SLRILDLAGNKITGEIPAEIGKL), 160 to 183 (KLAVLNLAENQMSGEIPASLTSLI), 184 to 205 (ELKHLELTENGITGVIPADFGS), 208 to 230 (MLSRVLLGRNELTGSIPESISGM), 232 to 254 (RLADLDLSKNHIEGPIPEWMGNM), 256 to 277 (VLSLLNLDCNSLTGPIPGSLLS), 280 to 302 (GLDVANLSRNALEGTIPDVFGSK), 304 to 326 (YLVSLDLSHNSLSGRIPDSLSSA), and 328 to 350 (FVGHLDISHNKLCGRIPTGFPFD).

This protein is able to complement bacterial recA mutations, but its native function in the plant is not known. This chain is DNA damage-repair/toleration protein DRT100 (DRT100), found in Arabidopsis thaliana (Mouse-ear cress).